We begin with the raw amino-acid sequence, 161 residues long: uncharacterized protein (161 aa).

The chain crosses the membrane as a helical span at residues 76–94 (ISISSQCIFNVVILSFVFT).

The protein localises to the membrane. This is an uncharacterized protein from Saccharomyces cerevisiae (strain ATCC 204508 / S288c) (Baker's yeast).